The chain runs to 313 residues: Porphobilinogen deaminase (313 aa).

C242 bears the S-(dipyrrolylmethanemethyl)cysteine mark.

The protein belongs to the HMBS family. In terms of assembly, monomer. Dipyrromethane is required as a cofactor.

The catalysed reaction is 4 porphobilinogen + H2O = hydroxymethylbilane + 4 NH4(+). It participates in porphyrin-containing compound metabolism; protoporphyrin-IX biosynthesis; coproporphyrinogen-III from 5-aminolevulinate: step 2/4. Its function is as follows. Tetrapolymerization of the monopyrrole PBG into the hydroxymethylbilane pre-uroporphyrinogen in several discrete steps. This is Porphobilinogen deaminase from Pseudomonas putida (strain ATCC 47054 / DSM 6125 / CFBP 8728 / NCIMB 11950 / KT2440).